The chain runs to 371 residues: Capsular polysaccharide phosphotransferase cps12A (371 aa).

Belongs to the stealth family.

Part of a capsular polysaccharide synthesis locus. The sequence is that of Capsular polysaccharide phosphotransferase cps12A (cps12A) from Actinobacillus pleuropneumoniae (Haemophilus pleuropneumoniae).